The sequence spans 179 residues: Tetratricopeptide repeat protein 36 (179 aa).

TPR repeat units follow at residues 43-76, 78-110, and 115-148; these read SLQL…CPKN, SAYN…AGPK, and CQAY…GSSF.

It belongs to the TTC36 family.

The polypeptide is Tetratricopeptide repeat protein 36 (Caenorhabditis elegans).